The chain runs to 72 residues: Disintegrin cereberin (72 aa).

The region spanning 1–72 (EAGEECDCGS…SADCPRNRFH (72 aa)) is the Disintegrin domain. 6 cysteine pairs are disulfide-bonded: cysteine 6/cysteine 21, cysteine 8/cysteine 16, cysteine 15/cysteine 38, cysteine 29/cysteine 35, cysteine 34/cysteine 59, and cysteine 47/cysteine 66. The Cell attachment site motif lies at 51–53 (RGD). A disordered region spans residues 51 to 72 (RGDNPDDRCTGQSADCPRNRFH).

Belongs to the venom metalloproteinase (M12B) family. P-II subfamily. P-IIa sub-subfamily. In terms of assembly, monomer (disintegrin). As to expression, expressed by the venom gland.

It localises to the secreted. Its function is as follows. Inhibits fibrinogen interaction with platelet. Acts by binding to alpha-IIb/beta-3 (ITGA2B/ITGB3) on the platelet surface and inhibits aggregation induced by ADP, thrombin, platelet-activating factor and collagen. This chain is Disintegrin cereberin, found in Crotalus cerberus (Arizona black rattlesnake).